The sequence spans 468 residues: Uronate isomerase (468 aa).

Belongs to the metallo-dependent hydrolases superfamily. Uronate isomerase family.

It carries out the reaction D-glucuronate = D-fructuronate. The enzyme catalyses aldehydo-D-galacturonate = keto-D-tagaturonate. It participates in carbohydrate metabolism; pentose and glucuronate interconversion. The sequence is that of Uronate isomerase from Phocaeicola vulgatus (strain ATCC 8482 / DSM 1447 / JCM 5826 / CCUG 4940 / NBRC 14291 / NCTC 11154) (Bacteroides vulgatus).